Reading from the N-terminus, the 259-residue chain is Cell division protein DivIB (259 aa).

Over 1 to 27 the chain is Cytoplasmic; it reads MADGKVIDIEQKVPDFREQRRRKSRRR. A helical transmembrane segment spans residues 28-45; sequence LVLYISILAFFLLFVYYF. Topologically, residues 46 to 259 are extracellular; that stretch reads QSDYSTVGHV…QEEEEIEIEE (214 aa). In terms of domain architecture, POTRA spans 50 to 118; the sequence is STVGHVDVYG…RSITLYVDEY (69 aa).

It belongs to the FtsQ/DivIB family. DivIB subfamily.

It localises to the cell membrane. In terms of biological role, cell division protein that may be involved in stabilizing or promoting the assembly of the division complex. The protein is Cell division protein DivIB of Bacillus selenitireducens (strain ATCC 700615 / DSM 15326 / MLS10).